Consider the following 402-residue polypeptide: Heat stress transcription factor A-6a (402 aa).

The disordered stretch occupies residues 1–28; the sequence is MLKPQTPRARRAAHPNSHMASSSSSSSL. Residues 212–258 adopt a coiled-coil conformation; it reads EVVSLKRDRAALRAEVIMLKQQYNACKSQLIAMEEMVRNIERRQQQT. A hydrophobic repeat HR-A/B region spans residues 216–266; the sequence is LKRDRAALRAEVIMLKQQYNACKSQLIAMEEMVRNIERRQQQTIGFFAKVL. Residues 290–293 carry the Nuclear localization signal motif; sequence KRQR. Positions 349–358 match the AHA motif; that stretch reads DDVWEELDAL.

This sequence belongs to the HSF family. Class A subfamily. As to quaternary structure, homotrimer. Exhibits temperature-dependent phosphorylation.

It is found in the nucleus. Its function is as follows. Transcriptional regulator that specifically binds DNA of heat shock promoter elements (HSE). The polypeptide is Heat stress transcription factor A-6a (HSFA6B) (Oryza sativa subsp. japonica (Rice)).